The following is a 394-amino-acid chain: D-aspartate oxidase (394 aa).

Residues isoleucine 19, alanine 57, serine 58, and glycine 62 each coordinate FAD. The helical transmembrane segment at 190–210 threads the bilayer; it reads LIGHEPTAGVIVCVGLGALVL. N-linked (GlcNAc...) asparagine glycosylation is present at asparagine 214. Positions 342, 373, and 375 each coordinate FAD.

The protein belongs to the DAMOX/DASOX family. The cofactor is FAD.

It is found in the membrane. It carries out the reaction D-aspartate + O2 + H2O = oxaloacetate + H2O2 + NH4(+). Functionally, selectively catalyzes the oxidative deamination of acidic amino acids. Protects the organism from the toxicity of D-amino acids. Enables the organism to utilize D-amino acids as a source of nutrients. Enables the organism to utilize D-aspartate and D-asparagine as a source of nitrogen. May play a role in its interaction with the host. The polypeptide is D-aspartate oxidase (Cryptococcus neoformans var. grubii serotype A (strain H99 / ATCC 208821 / CBS 10515 / FGSC 9487) (Filobasidiella neoformans var. grubii)).